The following is a 447-amino-acid chain: Bifunctional protein GlmU (447 aa).

A pyrophosphorylase region spans residues 1–225 (MLTVAILAAG…NGELQGINNR (225 aa)). UDP-N-acetyl-alpha-D-glucosamine-binding positions include 7–10 (LAAG), Lys21, Gln73, and 78–79 (GT). Asp103 is a binding site for Mg(2+). UDP-N-acetyl-alpha-D-glucosamine is bound by residues Gly140, Glu154, Asn169, and Asn223. Asn223 serves as a coordination point for Mg(2+). Residues 226–246 (VQLSKCEETIQNLIKEKHMLG) form a linker region. Residues 247-447 (GVTFINPASC…QVNIENWKKN (201 aa)) are N-acetyltransferase. Residues Arg328 and Lys346 each contribute to the UDP-N-acetyl-alpha-D-glucosamine site. His358 (proton acceptor) is an active-site residue. Residues Tyr361 and Asn372 each coordinate UDP-N-acetyl-alpha-D-glucosamine. Residues Ala375, Ala418, and Arg435 each contribute to the acetyl-CoA site.

In the N-terminal section; belongs to the N-acetylglucosamine-1-phosphate uridyltransferase family. This sequence in the C-terminal section; belongs to the transferase hexapeptide repeat family. In terms of assembly, homotrimer. Mg(2+) serves as cofactor.

The protein resides in the cytoplasm. The catalysed reaction is alpha-D-glucosamine 1-phosphate + acetyl-CoA = N-acetyl-alpha-D-glucosamine 1-phosphate + CoA + H(+). The enzyme catalyses N-acetyl-alpha-D-glucosamine 1-phosphate + UTP + H(+) = UDP-N-acetyl-alpha-D-glucosamine + diphosphate. It functions in the pathway nucleotide-sugar biosynthesis; UDP-N-acetyl-alpha-D-glucosamine biosynthesis; N-acetyl-alpha-D-glucosamine 1-phosphate from alpha-D-glucosamine 6-phosphate (route II): step 2/2. It participates in nucleotide-sugar biosynthesis; UDP-N-acetyl-alpha-D-glucosamine biosynthesis; UDP-N-acetyl-alpha-D-glucosamine from N-acetyl-alpha-D-glucosamine 1-phosphate: step 1/1. Its pathway is bacterial outer membrane biogenesis; LPS lipid A biosynthesis. In terms of biological role, catalyzes the last two sequential reactions in the de novo biosynthetic pathway for UDP-N-acetylglucosamine (UDP-GlcNAc). The C-terminal domain catalyzes the transfer of acetyl group from acetyl coenzyme A to glucosamine-1-phosphate (GlcN-1-P) to produce N-acetylglucosamine-1-phosphate (GlcNAc-1-P), which is converted into UDP-GlcNAc by the transfer of uridine 5-monophosphate (from uridine 5-triphosphate), a reaction catalyzed by the N-terminal domain. The protein is Bifunctional protein GlmU of Prochlorococcus marinus (strain MIT 9515).